A 233-amino-acid chain; its full sequence is uncharacterized protein (233 aa).

The span at 1-10 (MSSKLSKKKL) shows a compositional bias: basic residues. Residues 1 to 90 (MSSKLSKKKL…KRQKGKNNDR (90 aa)) are disordered. The span at 11 to 56 (KSLEYRSKKFDKKSQSLEEHEKKVQQKNEELEKKAADKISRDELPE) shows a compositional bias: basic and acidic residues. A compositionally biased stretch (basic residues) spans 76-85 (KTLKSKRQKG). An RRM domain is found at 92–171 (VILFVGNLPK…RKINIELTAG (80 aa)). Basic and acidic residues-rich tracts occupy residues 194-216 (MRQRVASEEQQAGEEKMARKAVA) and 224-233 (IHPDRLRLLQ). The tract at residues 194–233 (MRQRVASEEQQAGEEKMARKAVADEGLESGIHPDRLRLLQ) is disordered.

Its subcellular location is the nucleus. It localises to the nucleolus. This is an uncharacterized protein from Schizosaccharomyces pombe (strain 972 / ATCC 24843) (Fission yeast).